Reading from the N-terminus, the 372-residue chain is Mevalonate 3,5-bisphosphate decarboxylase (372 aa).

Belongs to the mevalonate 3,5-bisphosphate decarboxylase family. As to quaternary structure, homodimer.

It carries out the reaction (R)-3,5-bisphosphomevalonate + H(+) = isopentenyl phosphate + phosphate + CO2. It functions in the pathway isoprenoid biosynthesis; isopentenyl diphosphate biosynthesis via mevalonate pathway. Catalyzes the ATP-independent decarboxylation of (R)-mevalonate 3,5-bisphosphate to isopentenyl phosphate. Functions in an alternative mevalonate pathway, only present in extreme acidophiles of the Thermoplasmatales order, which passes through mevalonate 3-phosphate rather than mevalonate 5-phosphate. The protein is Mevalonate 3,5-bisphosphate decarboxylase of Thermoplasma volcanium (strain ATCC 51530 / DSM 4299 / JCM 9571 / NBRC 15438 / GSS1).